The following is a 287-amino-acid chain: Small ribosomal subunit biogenesis GTPase RsgA (287 aa).

Residues 61–218 (ISQLKRPAVA…MVDTPGFSSL (158 aa)) enclose the CP-type G domain. GTP contacts are provided by residues 110-113 (NKLD) and 161-169 (GPSGVGKST). The Zn(2+) site is built by C242, C247, H249, and C255.

Belongs to the TRAFAC class YlqF/YawG GTPase family. RsgA subfamily. In terms of assembly, monomer. Associates with 30S ribosomal subunit, binds 16S rRNA. Zn(2+) serves as cofactor.

The protein localises to the cytoplasm. Functionally, one of several proteins that assist in the late maturation steps of the functional core of the 30S ribosomal subunit. Helps release RbfA from mature subunits. May play a role in the assembly of ribosomal proteins into the subunit. Circularly permuted GTPase that catalyzes slow GTP hydrolysis, GTPase activity is stimulated by the 30S ribosomal subunit. The protein is Small ribosomal subunit biogenesis GTPase RsgA of Clostridium kluyveri (strain NBRC 12016).